We begin with the raw amino-acid sequence, 510 residues long: Beta-glucosidase 12 (510 aa).

A signal peptide spans 1-24 (MAAAGAMPGGLLLTFLLLAVVASG). Glutamine 53 is a binding site for a beta-D-glucoside. Asparagine 122 carries an N-linked (GlcNAc...) asparagine glycan. Residues histidine 157 and 202 to 203 (NE) each bind a beta-D-glucoside. Residue glutamate 203 is the Proton donor of the active site. Intrachain disulfides connect cysteine 208/cysteine 243 and cysteine 222/cysteine 230. Asparagine 229 is a glycosylation site (N-linked (GlcNAc...) asparagine). Residue tyrosine 346 participates in a beta-D-glucoside binding. N-linked (GlcNAc...) asparagine glycosylation is found at asparagine 361 and asparagine 371. Position 417 (glutamate 417) interacts with a beta-D-glucoside. The active-site Nucleophile is glutamate 417. The N-linked (GlcNAc...) asparagine glycan is linked to asparagine 425. A beta-D-glucoside contacts are provided by residues tryptophan 466, 473 to 474 (EW), and phenylalanine 482.

Belongs to the glycosyl hydrolase 1 family.

The protein resides in the secreted. It carries out the reaction Hydrolysis of terminal, non-reducing beta-D-glucosyl residues with release of beta-D-glucose.. In terms of biological role, hydrolyzes p-nitrophenyl beta-D-glucoside, p-nitrophenyl beta-D-galactoside, p-nitrophenyl beta-D-xyloside, p-nitrophenyl beta-D-fucoside, p-nitrophenyl beta-L-arabinoside, cello-oligosaccharides and laminaribiose. The sequence is that of Beta-glucosidase 12 from Oryza sativa subsp. japonica (Rice).